Consider the following 101-residue polypeptide: Protein Tat (101 aa).

Residues 1–24 are interaction with human CREBBP; sequence MEPVDPRLEPWKHPGSQPKTACTN. A transactivation region spans residues 1–48; sequence MEPVDPRLEPWKHPGSQPKTACTNCYCKKCCFHCQVCFITKGLGISYG. Zn(2+)-binding residues include Cys22, Cys25, and Cys27. The cysteine-rich stretch occupies residues 22 to 37; the sequence is CTNCYCKKCCFHCQVC. Residue Lys28 is modified to N6-acetyllysine; by host PCAF. Positions 30, 33, 34, and 37 each coordinate Zn(2+). The tract at residues 38–48 is core; sequence FITKGLGISYG. Positions 48 to 57 are enriched in basic residues; it reads GRKKRRQRRR. The disordered stretch occupies residues 48–101; that stretch reads GRKKRRQRRRAPPDSEVHQVSLPKQPASQPQGDPTGPKESKKKVERETETDPVH. The Nuclear localization signal, RNA-binding (TAR), and protein transduction motif lies at 49–57; that stretch reads RKKRRQRRR. An interaction with the host capping enzyme RNGTT region spans residues 49–86; it reads RKKRRQRRRAPPDSEVHQVSLPKQPASQPQGDPTGPKE. N6-acetyllysine; by host EP300 and GCN5L2 is present on residues Lys50 and Lys51. Residues Arg52 and Arg53 each carry the asymmetric dimethylarginine; by host PRMT6 modification. Lys71 is covalently cross-linked (Glycyl lysine isopeptide (Lys-Gly) (interchain with G-Cter in ubiquitin)). Positions 83–101 are enriched in basic and acidic residues; sequence GPKESKKKVERETETDPVH.

Belongs to the lentiviruses Tat family. Interacts with host CCNT1. Associates with the P-TEFb complex composed at least of Tat, P-TEFb (CDK9 and CCNT1), TAR RNA, RNA Pol II. Recruits the HATs CREBBP, TAF1/TFIID, EP300, PCAF and GCN5L2. Interacts with host KAT5/Tip60; this interaction targets the latter to degradation. Interacts with the host deacetylase SIRT1. Interacts with host capping enzyme RNGTT; this interaction stimulates RNGTT. Binds to host KDR, and to the host integrins ITGAV/ITGB3 and ITGA5/ITGB1. Interacts with host KPNB1/importin beta-1 without previous binding to KPNA1/importin alpha-1. Interacts with EIF2AK2. Interacts with host nucleosome assembly protein NAP1L1; this interaction may be required for the transport of Tat within the nucleus, since the two proteins interact at the nuclear rim. Interacts with host C1QBP/SF2P32; this interaction involves lysine-acetylated Tat. Interacts with the host chemokine receptors CCR2, CCR3 and CXCR4. Interacts with host DPP4/CD26; this interaction may trigger an anti-proliferative effect. Interacts with host LDLR. Interacts with the host extracellular matrix metalloproteinase MMP1. Interacts with host PRMT6; this interaction mediates Tat's methylation. Interacts with, and is ubiquitinated by MDM2/Hdm2. Interacts with host PSMC3 and HTATIP2. Interacts with STAB1; this interaction may overcome SATB1-mediated repression of IL2 and IL2RA (interleukin) in T cells by binding to the same domain than HDAC1. Interacts (when acetylated) with human CDK13, thereby increasing HIV-1 mRNA splicing and promoting the production of the doubly spliced HIV-1 protein Nef. Interacts with host TBP; this interaction modulates the activity of transcriptional pre-initiation complex. Interacts with host RELA. Interacts with host PLSCR1; this interaction negatively regulates Tat transactivation activity by altering its subcellular distribution. In terms of processing, asymmetrical arginine methylation by host PRMT6 seems to diminish the transactivation capacity of Tat and affects the interaction with host CCNT1. Acetylation by EP300, CREBBP, GCN5L2/GCN5 and PCAF regulates the transactivation activity of Tat. EP300-mediated acetylation of Lys-50 promotes dissociation of Tat from the TAR RNA through the competitive binding to PCAF's bromodomain. In addition, the non-acetylated Tat's N-terminus can also interact with PCAF. PCAF-mediated acetylation of Lys-28 enhances Tat's binding to CCNT1. Lys-50 is deacetylated by SIRT1. Post-translationally, polyubiquitination by host MDM2 does not target Tat to degradation, but activates its transactivation function and fosters interaction with CCNT1 and TAR RNA. In terms of processing, phosphorylated by EIF2AK2 on serine and threonine residues adjacent to the basic region important for TAR RNA binding and function. Phosphorylation of Tat by EIF2AK2 is dependent on the prior activation of EIF2AK2 by dsRNA.

Its subcellular location is the host nucleus. The protein resides in the host nucleolus. The protein localises to the host cytoplasm. It is found in the secreted. In terms of biological role, transcriptional activator that increases RNA Pol II processivity, thereby increasing the level of full-length viral transcripts. Recognizes a hairpin structure at the 5'-LTR of the nascent viral mRNAs referred to as the transactivation responsive RNA element (TAR) and recruits the cyclin T1-CDK9 complex (P-TEFb complex) that will in turn hyperphosphorylate the RNA polymerase II to allow efficient elongation. The CDK9 component of P-TEFb and other Tat-activated kinases hyperphosphorylate the C-terminus of RNA Pol II that becomes stabilized and much more processive. Other factors such as HTATSF1/Tat-SF1, SUPT5H/SPT5, and HTATIP2 are also important for Tat's function. Besides its effect on RNA Pol II processivity, Tat induces chromatin remodeling of proviral genes by recruiting the histone acetyltransferases (HATs) CREBBP, EP300 and PCAF to the chromatin. This also contributes to the increase in proviral transcription rate, especially when the provirus integrates in transcriptionally silent region of the host genome. To ensure maximal activation of the LTR, Tat mediates nuclear translocation of NF-kappa-B by interacting with host RELA. Through its interaction with host TBP, Tat may also modulate transcription initiation. Tat can reactivate a latently infected cell by penetrating in it and transactivating its LTR promoter. In the cytoplasm, Tat is thought to act as a translational activator of HIV-1 mRNAs. Extracellular circulating Tat can be endocytosed by surrounding uninfected cells via the binding to several surface receptors such as CD26, CXCR4, heparan sulfate proteoglycans (HSPG) or LDLR. Neurons are rarely infected, but they internalize Tat via their LDLR. Through its interaction with nuclear HATs, Tat is potentially able to control the acetylation-dependent cellular gene expression. Modulates the expression of many cellular genes involved in cell survival, proliferation or in coding for cytokines or cytokine receptors. Tat plays a role in T-cell and neurons apoptosis. Tat induced neurotoxicity and apoptosis probably contribute to neuroAIDS. Circulating Tat also acts as a chemokine-like and/or growth factor-like molecule that binds to specific receptors on the surface of the cells, affecting many cellular pathways. In the vascular system, Tat binds to ITGAV/ITGB3 and ITGA5/ITGB1 integrins dimers at the surface of endothelial cells and competes with bFGF for heparin-binding sites, leading to an excess of soluble bFGF. In Human immunodeficiency virus type 1 group M subtype B (isolate SF162) (HIV-1), this protein is Protein Tat.